Here is a 130-residue protein sequence, read N- to C-terminus: Small ribosomal subunit protein uS8 (130 aa).

It belongs to the universal ribosomal protein uS8 family. In terms of assembly, part of the 30S ribosomal subunit. Contacts proteins S5 and S12.

Its function is as follows. One of the primary rRNA binding proteins, it binds directly to 16S rRNA central domain where it helps coordinate assembly of the platform of the 30S subunit. This chain is Small ribosomal subunit protein uS8, found in Haemophilus influenzae (strain 86-028NP).